Consider the following 33-residue polypeptide: Brevinin-2GRb (33 aa).

Expressed by the skin glands.

It localises to the secreted. Antimicrobial peptide active against the Gram-positive bacterium S.aureus (MIC=25 uM) and against the Gram-negative bacteria E.coli (MIC=6 uM). Has no antifungal activity against C.albicans. Shows hemolytic activity against human erythrocytes only at high concentrations (LC(50)=180 uM). The polypeptide is Brevinin-2GRb (Odorrana grahami (Yunnanfu frog)).